We begin with the raw amino-acid sequence, 558 residues long: Polypeptide N-acetylgalactosaminyltransferase 16 (558 aa).

Residues 1 to 6 (MRKIRA) lie on the Cytoplasmic side of the membrane. The helical; Signal-anchor for type II membrane protein transmembrane segment at 7 to 26 (NAIAILTVAWILGTFYYLWQ) threads the bilayer. Topologically, residues 27–558 (DNRAHAASSS…AQQWQLLPHT (532 aa)) are lumenal. The segment covering 34 to 46 (SSSGRGAQRAGGR) has biased composition (low complexity). Residues 34 to 53 (SSSGRGAQRAGGRPEQLRED) are disordered. Intrachain disulfides connect Cys-113-Cys-340, Cys-331-Cys-409, Cys-441-Cys-460, Cys-486-Cys-506, and Cys-530-Cys-543. A catalytic subdomain A region spans residues 122-227 (LPATSVIITF…VEWLQPMLQR (106 aa)). The substrate site is built by Asp-163 and Arg-188. Residue Asp-211 coordinates Mn(2+). Residue Ser-212 coordinates substrate. Residue His-213 coordinates Mn(2+). The segment at 286-348 (PIRTPVIAGG…PCSRVGHVFR (63 aa)) is catalytic subdomain B. Position 317 (Trp-317) interacts with substrate. His-345 is a binding site for Mn(2+). Substrate is bound by residues Arg-348, His-351, and Tyr-353. The region spanning 428-555 (KEVLPGVIKQ…DAQAQQWQLL (128 aa)) is the Ricin B-type lectin domain.

The protein belongs to the glycosyltransferase 2 family. GalNAc-T subfamily. Mn(2+) serves as cofactor. In terms of tissue distribution, in the CNS, it is predominantly expressed in several distinct hypothalamic, thalamic and amygdaloid nuclei. The most abundant level of expression is in the paraventricular, ventromedial and arcuate nuclei of the hypothalamus, the anterodorsal and parafascicular nuclei of the thalamus and the central, basomedial and medial nuclei of the amygdala. Also expressed in cerebral cortex, lateral septum, habenula and hippocampus.

The protein resides in the golgi apparatus membrane. It carries out the reaction L-seryl-[protein] + UDP-N-acetyl-alpha-D-galactosamine = a 3-O-[N-acetyl-alpha-D-galactosaminyl]-L-seryl-[protein] + UDP + H(+). The enzyme catalyses L-threonyl-[protein] + UDP-N-acetyl-alpha-D-galactosamine = a 3-O-[N-acetyl-alpha-D-galactosaminyl]-L-threonyl-[protein] + UDP + H(+). It functions in the pathway protein modification; protein glycosylation. In terms of biological role, catalyzes the initial reaction in O-linked oligosaccharide biosynthesis, the transfer of an N-acetyl-D-galactosamine residue to a serine or threonine residue on the protein receptor. This chain is Polypeptide N-acetylgalactosaminyltransferase 16 (Galnt16), found in Mus musculus (Mouse).